The following is a 243-amino-acid chain: UPF0688 protein C1orf174 (243 aa).

2 disordered regions span residues 78–100 (NDSASLPKVTPETPCENEFAEGS) and 132–243 (LAKT…DAEM). Low complexity predominate over residues 145–157 (SAGSGAEESNSSS). Phosphoserine is present on residues Ser148 and Ser189. Residues 233–243 (DDDDDDDDAEM) show a composition bias toward acidic residues.

The protein belongs to the UPF0688 family.

The protein resides in the nucleus. In Homo sapiens (Human), this protein is UPF0688 protein C1orf174 (C1orf174).